A 442-amino-acid chain; its full sequence is MAKTGMYVGLDIGTTSVKVVVAEYIDSQMNIIGVGNAKSEGINRGIIVDIDKTVQAIQRAVRQAEEKAGIQIKGVSVGLPANLLEVENCQGMIAVNGDSKEITDEDVRNVASAALVRSIPPERQIVSILPQDFTVDGFEGIKDPRGMIGVRLEMYGLLFTGPKTIVHNIRKCVENAGLVVNELVITPLALTETILSDGEKDFGTIVIDMGGGQTTTAVMHDKQLKFTSLDQEGGEFVTKDISIVLNTSFNNAEALKINYGDAYPERTSANEEFPVDVIGQSEPVKVDERYLSEVISARMEQIFNKAKEALDQIEALELPGGIVLTGGAASLPGVVDLAQEIFGVNVKLYVPNQMGLRNPVFTNVISIVDYSANLSEVYQLAKIAVTGETVVAHHTTVEQEVTSYDNDSYDAPEETVYDEPEQKKSDEDVTTKIKGFFSKIFD.

The interval 401–428 is disordered; that stretch reads VTSYDNDSYDAPEETVYDEPEQKKSDED. Positions 407–419 are enriched in acidic residues; sequence DSYDAPEETVYDE.

Belongs to the FtsA/MreB family. Self-interacts. Interacts with FtsZ.

The protein resides in the cell membrane. Functionally, cell division protein that is involved in the assembly of the Z ring. May serve as a membrane anchor for the Z ring. This chain is Cell division protein FtsA, found in Enterococcus hirae.